Here is an 868-residue protein sequence, read N- to C-terminus: Protein translocase subunit SecA (868 aa).

ATP-binding positions include glutamine 87, 105–109 (GEGKT), and aspartate 500. 4 residues coordinate Zn(2+): cysteine 849, cysteine 851, cysteine 860, and histidine 861.

It belongs to the SecA family. In terms of assembly, monomer and homodimer. Part of the essential Sec protein translocation apparatus which comprises SecA, SecYEG and auxiliary proteins SecDF-YajC and YidC. The cofactor is Zn(2+).

It localises to the cell membrane. The protein resides in the cytoplasm. It carries out the reaction ATP + H2O + cellular proteinSide 1 = ADP + phosphate + cellular proteinSide 2.. Part of the Sec protein translocase complex. Interacts with the SecYEG preprotein conducting channel. Has a central role in coupling the hydrolysis of ATP to the transfer of proteins into and across the cell membrane, serving both as a receptor for the preprotein-SecB complex and as an ATP-driven molecular motor driving the stepwise translocation of polypeptide chains across the membrane. The chain is Protein translocase subunit SecA from Wolbachia pipientis wMel.